A 306-amino-acid polypeptide reads, in one-letter code: uncharacterized protein (306 aa).

Residues 13–39 (NMLNEIAANNNLLNNKNNQTNQLNNNQ) are a coiled coil. Disordered stretches follow at residues 44 to 76 (YNNQ…HQQN), 103 to 204 (DSKE…QSGQ), and 216 to 249 (QKQL…TMQH). Low complexity predominate over residues 119-201 (HQQPIQNNPS…QFAQPNQYNQ (83 aa)). Over residues 218-235 (QLDKNQPEKIPSKPEKNQ) the composition is skewed to basic and acidic residues. A helical membrane pass occupies residues 279-299 (LFDYIIIPIALVLVFLFLVHP).

The protein resides in the membrane. This is an uncharacterized protein from Acanthamoeba polyphaga mimivirus (APMV).